Reading from the N-terminus, the 496-residue chain is UDP-N-acetylmuramoylalanine--D-glutamate ligase (496 aa).

An ATP-binding site is contributed by 130–136 (GTNGKTT).

It belongs to the MurCDEF family. In terms of assembly, interacts with PknA. In terms of processing, phosphorylated by PknA.

The protein localises to the cytoplasm. The catalysed reaction is UDP-N-acetyl-alpha-D-muramoyl-L-alanine + D-glutamate + ATP = UDP-N-acetyl-alpha-D-muramoyl-L-alanyl-D-glutamate + ADP + phosphate + H(+). Its pathway is cell wall biogenesis; peptidoglycan biosynthesis. Cell wall formation. Catalyzes the addition of glutamate to the nucleotide precursor UDP-N-acetylmuramoyl-L-alanine (UMA). The protein is UDP-N-acetylmuramoylalanine--D-glutamate ligase of Mycobacterium tuberculosis (strain ATCC 25177 / H37Ra).